A 69-amino-acid chain; its full sequence is Bowman-Birk type proteinase inhibitor A2 (69 aa).

Cystine bridges form between Cys-12-Cys-31, Cys-18-Cys-29, Cys-38-Cys-45, and Cys-42-Cys-59.

The protein belongs to the Bowman-Birk serine protease inhibitor family. As to expression, expressed in bulb (at protein level).

Functionally, serine protease inhibitor. This Hyacinthus orientalis (Common hyacinth) protein is Bowman-Birk type proteinase inhibitor A2.